We begin with the raw amino-acid sequence, 358 residues long: Aromatic amino acid aminotransferase (358 aa).

Lysine 222 is modified (N6-(pyridoxal phosphate)lysine).

This sequence belongs to the class-II pyridoxal-phosphate-dependent aminotransferase family. In terms of assembly, homodimer. The cofactor is pyridoxal 5'-phosphate.

The enzyme catalyses an aromatic L-alpha-amino acid + 2-oxoglutarate = an aromatic oxo-acid + L-glutamate. In terms of biological role, aminotransferase that catalyzes the conversion of aromatic amino acids and 2-oxoglutarate into corresponding aromatic oxo acids and L-glutamate. This is Aromatic amino acid aminotransferase from Mycobacterium sp. (strain KMS).